A 188-amino-acid chain; its full sequence is Probable nicotinate-nucleotide adenylyltransferase (188 aa).

Belongs to the NadD family.

It catalyses the reaction nicotinate beta-D-ribonucleotide + ATP + H(+) = deamido-NAD(+) + diphosphate. Its pathway is cofactor biosynthesis; NAD(+) biosynthesis; deamido-NAD(+) from nicotinate D-ribonucleotide: step 1/1. Functionally, catalyzes the reversible adenylation of nicotinate mononucleotide (NaMN) to nicotinic acid adenine dinucleotide (NaAD). The chain is Probable nicotinate-nucleotide adenylyltransferase from Acholeplasma laidlawii (strain PG-8A).